Consider the following 328-residue polypeptide: Nickel import system permease protein NikB (328 aa).

The next 6 helical transmembrane spans lie at 11 to 31 (LMQM…LMKL), 104 to 124 (LLIS…LGII), 139 to 159 (VIST…LLFI), 170 to 190 (ILSQ…AYII), 229 to 249 (ILPI…GTVV), and 279 to 299 (VLFI…LTLL). The ABC transmembrane type-1 domain maps to 100–297 (APITLLISFS…IINTIADLLT (198 aa)).

This sequence belongs to the binding-protein-dependent transport system permease family. OppBC subfamily. As to quaternary structure, the complex is composed of two ATP-binding proteins (NikD and NikE), two transmembrane proteins (NikB and NikC) and a solute-binding protein (NikA).

It localises to the cell membrane. Its function is as follows. Part of the ABC transporter complex NikABCDE (Opp2) involved in nickel import. Probably responsible for the translocation of the substrate across the membrane. The sequence is that of Nickel import system permease protein NikB from Staphylococcus aureus (strain bovine RF122 / ET3-1).